The chain runs to 133 residues: Fatty acid-binding protein, heart (133 aa).

V2 is subject to N-acetylvaline. Phosphothreonine is present on T8. Y20 carries the phosphotyrosine; by Tyr-kinases modification. S23 carries the phosphoserine modification. Position 30 is a phosphothreonine (T30). Phosphoserine is present on S83. 127–129 (RTY) contacts (9Z)-octadecenoate. Residue 127–129 (RTY) participates in hexadecanoate binding. Position 127 to 129 (127 to 129 (RTY)) interacts with octadecanoate.

The protein belongs to the calycin superfamily. Fatty-acid binding protein (FABP) family.

Its subcellular location is the cytoplasm. Its function is as follows. FABPs are thought to play a role in the intracellular transport of long-chain fatty acids and their acyl-CoA esters. The sequence is that of Fatty acid-binding protein, heart (FABP3) from Sus scrofa (Pig).